The primary structure comprises 436 residues: Ribulose bisphosphate carboxylase large chain (436 aa).

Residues Asn104 and Thr154 each coordinate substrate. The Proton acceptor role is filled by Lys156. Residue Lys158 participates in substrate binding. Lys182, Asp184, and Glu185 together coordinate Mg(2+). Lys182 carries the post-translational modification N6-carboxylysine. The Proton acceptor role is filled by His275. Substrate is bound by residues Arg276, His308, and Ser360.

The protein belongs to the RuBisCO large chain family. Type I subfamily. As to quaternary structure, heterohexadecamer of 8 large chains and 8 small chains. Mg(2+) is required as a cofactor.

It localises to the plastid. It is found in the chloroplast. The enzyme catalyses 2 (2R)-3-phosphoglycerate + 2 H(+) = D-ribulose 1,5-bisphosphate + CO2 + H2O. It catalyses the reaction D-ribulose 1,5-bisphosphate + O2 = 2-phosphoglycolate + (2R)-3-phosphoglycerate + 2 H(+). Its function is as follows. RuBisCO catalyzes two reactions: the carboxylation of D-ribulose 1,5-bisphosphate, the primary event in carbon dioxide fixation, as well as the oxidative fragmentation of the pentose substrate in the photorespiration process. Both reactions occur simultaneously and in competition at the same active site. The polypeptide is Ribulose bisphosphate carboxylase large chain (Euglena myxocylindracea).